The sequence spans 142 residues: Dromaiocalcin-2 (142 aa).

Cystine bridges form between Cys-6–Cys-17, Cys-34–Cys-138, and Cys-113–Cys-130. The 127-residue stretch at 13 to 139 (FDGRCYGFFP…CSDRKPFICA (127 aa)) folds into the C-type lectin domain. Ser-62 and Ser-68 each carry phosphoserine.

In terms of processing, a minor form with some unmodified Ser-68 and partial phosphorylation of Ser-66 may also occur.

The protein localises to the secreted. Its subcellular location is the extracellular space. The protein resides in the extracellular matrix. This Dromaius novaehollandiae (Emu) protein is Dromaiocalcin-2.